We begin with the raw amino-acid sequence, 228 residues long: MCPKGSSVKGSLLLLLLMSSRFLFKAVESLPICPSGAVNCQVSLSDLFDRAVMLSHYIHSPSSEMFNEFDERYAQGRGFITKAINSCHTSSLSTPEDKEQAQQIRHEDLLNLVLRVLRSWSEPLYHLVTEVRSMQEAPDTILLKAMEIEEQNKRLLEGMEKIVGQVHPGDRENEVYSVWSGLPSLQMADEDTRLFAFYNLLHCLRRDSHKIDNYLKLLKCRLIHDSNC.

The first 29 residues, 1 to 29, serve as a signal peptide directing secretion; the sequence is MCPKGSSVKGSLLLLLLMSSRFLFKAVES. Cys33 and Cys40 form a disulfide bridge. A phosphoserine mark is found at Ser55, Ser63, and Ser119. Disulfide bonds link Cys87–Cys203 and Cys220–Cys228.

The protein belongs to the somatotropin/prolactin family. As to quaternary structure, interacts with PRLR.

The protein localises to the secreted. Prolactin acts primarily on the mammary gland by promoting lactation. This is Prolactin (PRL) from Monodelphis domestica (Gray short-tailed opossum).